Here is a 520-residue protein sequence, read N- to C-terminus: Translation initiation factor IF3-1, mitochondrial (520 aa).

The N-terminal 66 residues, 1-66, are a transit peptide targeting the mitochondrion; the sequence is MAIWRIINRS…SNIFQNLRFL (66 aa). The segment covering 271–282 has biased composition (basic and acidic residues); sequence ARVKEESPKPDS. Positions 271 to 520 are disordered; sequence ARVKEESPKP…YGIFSTPKTK (250 aa). The segment covering 336-361 has biased composition (polar residues); sequence EPQSPNQHVNPQRPRFSNQAPNQQPT. The segment covering 369–379 has biased composition (pro residues); sequence PNQPPSAPRPQ. Composition is skewed to polar residues over residues 404-422 and 458-468; these read NQAP…FPNQ and FQNQAPNQQPT. Over residues 473–485 the composition is skewed to pro residues; the sequence is PQPPNPPRAPPRP.

This sequence belongs to the IF-3 family. As to quaternary structure, monomer.

The protein resides in the mitochondrion. In terms of biological role, IF-3 binds to the 30S ribosomal subunit and shifts the equilibrium between 70S ribosomes and their 50S and 30S subunits in favor of the free subunits, thus enhancing the availability of 30S subunits on which protein synthesis initiation begins. The sequence is that of Translation initiation factor IF3-1, mitochondrial from Arabidopsis thaliana (Mouse-ear cress).